The sequence spans 403 residues: Dual-specificity RNA methyltransferase RlmN (403 aa).

The Proton acceptor role is filled by Glu126. Residues 132–375 (ETDRGTLCVS…VRTPRGRDIL (244 aa)) enclose the Radical SAM core domain. An intrachain disulfide couples Cys139 to Cys378. [4Fe-4S] cluster is bound by residues Cys146, Cys150, and Cys153. Residues 204-205 (GE), Ser236, 258-260 (SLH), and Asn335 contribute to the S-adenosyl-L-methionine site. Residue Cys378 is the S-methylcysteine intermediate of the active site.

Belongs to the radical SAM superfamily. RlmN family. Requires [4Fe-4S] cluster as cofactor.

It localises to the cytoplasm. It carries out the reaction adenosine(2503) in 23S rRNA + 2 reduced [2Fe-2S]-[ferredoxin] + 2 S-adenosyl-L-methionine = 2-methyladenosine(2503) in 23S rRNA + 5'-deoxyadenosine + L-methionine + 2 oxidized [2Fe-2S]-[ferredoxin] + S-adenosyl-L-homocysteine. The catalysed reaction is adenosine(37) in tRNA + 2 reduced [2Fe-2S]-[ferredoxin] + 2 S-adenosyl-L-methionine = 2-methyladenosine(37) in tRNA + 5'-deoxyadenosine + L-methionine + 2 oxidized [2Fe-2S]-[ferredoxin] + S-adenosyl-L-homocysteine. Specifically methylates position 2 of adenine 2503 in 23S rRNA and position 2 of adenine 37 in tRNAs. m2A2503 modification seems to play a crucial role in the proofreading step occurring at the peptidyl transferase center and thus would serve to optimize ribosomal fidelity. In Bradyrhizobium sp. (strain BTAi1 / ATCC BAA-1182), this protein is Dual-specificity RNA methyltransferase RlmN.